We begin with the raw amino-acid sequence, 216 residues long: CRIB domain-containing protein RIC7 (216 aa).

The region spanning 36–49 (IGNPTDVKHVAHIG) is the CRIB domain. The tract at residues 52 to 216 (GPSDNATAPS…PQFEDDRNGF (165 aa)) is disordered. Basic and acidic residues predominate over residues 108–121 (SSSEKGSPTKERSD).

Interacts with ARAC4/ROP2 and ARAC11/ROP1. Expressed in roots, leaves, guard cells, stems, flowers, siliques and pollen.

It localises to the nucleus. Its subcellular location is the cytoplasm. The protein localises to the cell membrane. Its function is as follows. Functions as a downstream effector of Rho-related GTP binding proteins of the 'Rho of Plants' (ROPs) family. Participates in the propagation of ROP GTPase signals in specific cellular responses. Functions as a downstream effector of active ARAC4/ROP2 GTPase which is involved in the prevention of excessive stomatal opening upon light stimulation. Is involved in pollen tube growth regulation through its interaction with ARAC11/ROP1. This chain is CRIB domain-containing protein RIC7 (RIC7), found in Arabidopsis thaliana (Mouse-ear cress).